Consider the following 86-residue polypeptide: Co-chaperonin GroES (86 aa).

It belongs to the GroES chaperonin family. As to quaternary structure, heptamer of 7 subunits arranged in a ring. Interacts with the chaperonin GroEL.

It is found in the cytoplasm. Together with the chaperonin GroEL, plays an essential role in assisting protein folding. The GroEL-GroES system forms a nano-cage that allows encapsulation of the non-native substrate proteins and provides a physical environment optimized to promote and accelerate protein folding. GroES binds to the apical surface of the GroEL ring, thereby capping the opening of the GroEL channel. In Campylobacter lari (strain RM2100 / D67 / ATCC BAA-1060), this protein is Co-chaperonin GroES.